Reading from the N-terminus, the 82-residue chain is Histidine-rich protein (82 aa).

This chain is Histidine-rich protein, found in Plasmodium falciparum (isolate fcm17 / Senegal).